A 330-amino-acid chain; its full sequence is Putative [LysW]-L-2-aminoadipate/[LysW]-L-glutamate phosphate reductase (330 aa).

Residues 10 to 13 (SGYI) and 34 to 36 (SRR) contribute to the NADP(+) site. Cys-142 is an active-site residue. Residue Asn-297 coordinates NADP(+).

The protein belongs to the NAGSA dehydrogenase family. Type 1 subfamily. LysY sub-subfamily.

The protein localises to the cytoplasm. The enzyme catalyses [amino-group carrier protein]-C-terminal-N-(1-carboxy-5-oxopentan-1-yl)-L-glutamine + phosphate + NADP(+) = [amino-group carrier protein]-C-terminal-N-(1-carboxy-5-phosphooxy-5-oxopentan-1-yl)-L-glutamine + NADPH + H(+). It carries out the reaction [amino-group carrier protein]-C-terminal-gamma-(L-glutamyl-5-semialdehyde)-L-glutamate + phosphate + NADP(+) = [amino-group carrier protein]-C-terminal-gamma-(5-phospho-L-glutamyl)-L-glutamate + NADPH + H(+). The protein operates within amino-acid biosynthesis; L-lysine biosynthesis via AAA pathway; L-lysine from L-alpha-aminoadipate (Thermus route): step 3/5. Its pathway is amino-acid biosynthesis; L-arginine biosynthesis. Its function is as follows. Involved in both the arginine and lysine biosynthetic pathways. The sequence is that of Putative [LysW]-L-2-aminoadipate/[LysW]-L-glutamate phosphate reductase from Thermococcus kodakarensis (strain ATCC BAA-918 / JCM 12380 / KOD1) (Pyrococcus kodakaraensis (strain KOD1)).